Consider the following 286-residue polypeptide: ATP synthase gamma chain (286 aa).

It belongs to the ATPase gamma chain family. F-type ATPases have 2 components, CF(1) - the catalytic core - and CF(0) - the membrane proton channel. CF(1) has five subunits: alpha(3), beta(3), gamma(1), delta(1), epsilon(1). CF(0) has three main subunits: a, b and c.

The protein resides in the cell inner membrane. Its function is as follows. Produces ATP from ADP in the presence of a proton gradient across the membrane. The gamma chain is believed to be important in regulating ATPase activity and the flow of protons through the CF(0) complex. The protein is ATP synthase gamma chain of Shewanella oneidensis (strain ATCC 700550 / JCM 31522 / CIP 106686 / LMG 19005 / NCIMB 14063 / MR-1).